The following is a 119-amino-acid chain: Myohemerythrin-1 (119 aa).

Fe cation is bound by residues His25, His55, Asn58, Glu59, His74, His78, His107, and Asp112.

This sequence belongs to the hemerythrin family. Monomer. As to expression, muscle.

Myohemerythrin is an oxygen-binding protein found in the retractor muscles of certain worms. The oxygen-binding site contains two iron atoms. In Phascolopsis gouldii (Peanut worm), this protein is Myohemerythrin-1.